A 332-amino-acid polypeptide reads, in one-letter code: Phosphoribosylformylglycinamidine cyclo-ligase (332 aa).

Belongs to the AIR synthase family.

Its subcellular location is the cytoplasm. The catalysed reaction is 2-formamido-N(1)-(5-O-phospho-beta-D-ribosyl)acetamidine + ATP = 5-amino-1-(5-phospho-beta-D-ribosyl)imidazole + ADP + phosphate + H(+). The protein operates within purine metabolism; IMP biosynthesis via de novo pathway; 5-amino-1-(5-phospho-D-ribosyl)imidazole from N(2)-formyl-N(1)-(5-phospho-D-ribosyl)glycinamide: step 2/2. This Clostridium acetobutylicum (strain ATCC 824 / DSM 792 / JCM 1419 / IAM 19013 / LMG 5710 / NBRC 13948 / NRRL B-527 / VKM B-1787 / 2291 / W) protein is Phosphoribosylformylglycinamidine cyclo-ligase.